The primary structure comprises 301 residues: Epimerase family protein Mb2239 (301 aa).

Belongs to the NAD(P)-dependent epimerase/dehydratase family. SDR39U1 subfamily.

This chain is Epimerase family protein Mb2239, found in Mycobacterium bovis (strain ATCC BAA-935 / AF2122/97).